The following is a 498-amino-acid chain: MVPVVALVGRPNVGKSTLFNRLTRTRDALVADFPGLTRDRKYGQARLGEEHEFIVIDTGGIDGTEEGVETKMAEQSLAAIDEADVVLFLVDGRAGLTPSDEAIAAHLRKIEKPAMLVVNKIDGIDADAACADFWQLGVDDMYQIAAAHGRGVTALLERALAPFFDDLLASESEDGEIEDLTEFEDEELAVEDYTEEDAEAEFKRLQDQPIKLAIIGRPNVGKSTLTNRILGEERVVVYDMPGTTRDSIYIPMERDGREYVLIDTAGVRRRGRINETVEKFSVVKTLKAVEDANVVLLVIDARENISDQDLSLLGFALNAGRSIVLAVNKWDGLDNEVKENVKKELDRRLGFVDFARIHFISALHGTGVGHLFESIQEAYKSATTRVGTSVLTRIMKMATDDHQPPMVRGRRIKLKYAHAGGYNPPIVVVHGNMVRDLPDSYKRYLMNYFRKSLEIMGTPIRINFQNSDNPYENRTNKLTLSQERKRKRMMSAVKNRNK.

EngA-type G domains lie at 3–167 (PVVA…FDDL) and 210–383 (IKLA…KSAT). GTP is bound by residues 9–16 (GRPNVGKS), 57–61 (DTGGI), 119–122 (NKID), 216–223 (GRPNVGKS), 263–267 (DTAGV), and 328–331 (NKWD). The KH-like domain occupies 384–468 (TRVGTSVLTR…PIRINFQNSD (85 aa)).

The protein belongs to the TRAFAC class TrmE-Era-EngA-EngB-Septin-like GTPase superfamily. EngA (Der) GTPase family. As to quaternary structure, associates with the 50S ribosomal subunit.

Its function is as follows. GTPase that plays an essential role in the late steps of ribosome biogenesis. This is GTPase Der from Vibrio campbellii (strain ATCC BAA-1116).